We begin with the raw amino-acid sequence, 556 residues long: Glucose-6-phosphate isomerase (556 aa).

Residue Glu-360 is the Proton donor of the active site. Active-site residues include His-391 and Lys-519.

This sequence belongs to the GPI family.

Its subcellular location is the cytoplasm. The catalysed reaction is alpha-D-glucose 6-phosphate = beta-D-fructose 6-phosphate. The protein operates within carbohydrate biosynthesis; gluconeogenesis. It functions in the pathway carbohydrate degradation; glycolysis; D-glyceraldehyde 3-phosphate and glycerone phosphate from D-glucose: step 2/4. Functionally, catalyzes the reversible isomerization of glucose-6-phosphate to fructose-6-phosphate. This Acinetobacter baumannii (strain SDF) protein is Glucose-6-phosphate isomerase.